We begin with the raw amino-acid sequence, 2009 residues long: Rootletin (2009 aa).

Coiled-coil stretches lie at residues 74–265 (EMAS…VTSD) and 346–438 (ASLH…LRLQ). Disordered stretches follow at residues 462-519 (ALSD…CSDS), 575-594 (RDQT…EAQR), 636-665 (ELKR…LERS), 1180-1225 (EAQR…ELRS), and 1448-1501 (GRVS…EAVR). The span at 463-484 (LSDTESGVQLSSSERTADTSDG) shows a compositional bias: polar residues. Coiled coils occupy residues 550–1058 (LGSV…LLAE) and 1091–1439 (LEME…GLRS). Over residues 577–586 (QTAASAQAQE) the composition is skewed to low complexity. Positions 656 to 665 (ARARRELERS) are enriched in basic and acidic residues. 3 positions are modified to phosphoserine: Ser-1453, Ser-1463, and Ser-1469. Tyr-1475 is subject to Phosphotyrosine. Ser-1476, Ser-1479, Ser-1483, Ser-1489, and Ser-1568 each carry phosphoserine. Residues 1479 to 1494 (SQPPSPGLIASPAPPD) show a composition bias toward pro residues. Coiled coils occupy residues 1498–1697 (EAVR…GTLQ) and 1744–1998 (HLQK…RSSA). The segment at 1957-2009 (QVQTERTLEARERAHRQRVSGLEEQVSTLKAQLHQELRRSSASVSLPPGTPEK) is disordered.

Belongs to the rootletin family. Homomer. Interacts with KLC3, NEK2 and the N-terminus of CEP250. Interacts with CEP44. In terms of processing, phosphorylated by NEK2 which may regulate its association with centrosomes. In terms of tissue distribution, highest expression detected in photoreceptor cells of retina. Expressed at lower levels in brain, trachea and kidney. Detected in all major ciliated epithelia. During embryonic development, enriched along the apical domains of neuroepithelium in brain ventricular zone, in primordia of retinal pigment epithelia and in neural retina.

It is found in the cytoplasm. It localises to the cytoskeleton. The protein localises to the microtubule organizing center. Its subcellular location is the centrosome. The protein resides in the centriole. It is found in the cilium basal body. Major structural component of the ciliary rootlet, a cytoskeletal-like structure in ciliated cells which originates from the basal body at the proximal end of a cilium and extends proximally toward the cell nucleus. Furthermore, is required for the correct positioning of the cilium basal body relative to the cell nucleus, to allow for ciliogenesis. Contributes to centrosome cohesion before mitosis. The polypeptide is Rootletin (Mus musculus (Mouse)).